A 383-amino-acid polypeptide reads, in one-letter code: Chitinase-3-like protein 1 (383 aa).

Residues 1–21 form the signal peptide; it reads MGLRASGTGFVVLVLLQSCAA. A GH18 domain is found at 22 to 383; that stretch reads YKLICYYTSW…SAVKDVLAEV (362 aa). Cysteine 26 and cysteine 51 are joined by a disulfide. N-linked (GlcNAc...) asparagine glycosylation is present at asparagine 60. Chitin contacts are provided by residues 70–71, 97–100, tyrosine 141, 204–207, and arginine 263; these read EW, GGWN, and LTYD. An intrachain disulfide couples cysteine 300 to cysteine 364. The tract at residues 324–338 is important for AKT1 activation and IL8 production; it reads QWVAYDDQESVKNKA. Tryptophan 352 contributes to the chitin binding site. Asparagine 367 is a glycosylation site (N-linked (GlcNAc...) asparagine).

Belongs to the glycosyl hydrolase 18 family. Monomer.

It localises to the secreted. The protein resides in the extracellular space. It is found in the cytoplasm. Its subcellular location is the perinuclear region. The protein localises to the endoplasmic reticulum. In terms of biological role, carbohydrate-binding lectin with a preference for chitin. Has no chitinase activity. May play a role in tissue remodeling and in the capacity of cells to respond to and cope with changes in their environment. Plays a role in T-helper cell type 2 (Th2) inflammatory response and IL-13-induced inflammation, regulating allergen sensitization, inflammatory cell apoptosis, dendritic cell accumulation and M2 macrophage differentiation. Facilitates invasion of pathogenic enteric bacteria into colonic mucosa and lymphoid organs. Mediates activation of AKT1 signaling pathway and subsequent IL8 production in colonic epithelial cells. Regulates antibacterial responses in lung by contributing to macrophage bacterial killing, controlling bacterial dissemination and augmenting host tolerance. Also regulates hyperoxia-induced injury, inflammation and epithelial apoptosis in lung. This is Chitinase-3-like protein 1 (CHI3L1) from Capra hircus (Goat).